The sequence spans 318 residues: 2-oxoacid:ferredoxin oxidoreductase 1, subunit beta (318 aa).

[4Fe-4S] cluster-binding residues include Cys18, Cys21, and Cys52. Thiamine diphosphate is bound by residues 50 to 53 and His69; that span reads IGCS. Asp94 contacts Mg(2+). 95–96 contacts thiamine diphosphate; that stretch reads GD. Mg(2+) is bound by residues Asn122 and Val124. 126-127 contacts thiamine diphosphate; sequence GL. Cys201 serves as a coordination point for [4Fe-4S] cluster.

In terms of assembly, heterodimer composed of an alpha and a beta subunit. [4Fe-4S] cluster is required as a cofactor. It depends on thiamine diphosphate as a cofactor. Requires Mg(2+) as cofactor.

It carries out the reaction a 2-oxocarboxylate + 2 oxidized [2Fe-2S]-[ferredoxin] + CoA = an acyl-CoA + 2 reduced [2Fe-2S]-[ferredoxin] + CO2 + H(+). Functionally, catalyzes the coenzyme A-dependent oxidative decarboxylation of different 2-oxoacids such as pyruvate, 2-oxobutyrate and glyoxylate to form their CoA derivatives. This is 2-oxoacid:ferredoxin oxidoreductase 1, subunit beta from Aeropyrum pernix (strain ATCC 700893 / DSM 11879 / JCM 9820 / NBRC 100138 / K1).